The sequence spans 101 residues: Glutaredoxin-1 (101 aa).

The 97-residue stretch at 5–101 (KDRVEKLIQT…GSLSKMIAAL (97 aa)) folds into the Glutaredoxin domain. Cys25 and Cys28 form a disulfide bridge.

Belongs to the glutaredoxin family.

It is found in the cytoplasm. The protein localises to the cytosol. Its function is as follows. Multifunctional enzyme with glutathione-dependent oxidoreductase, glutathione peroxidase and glutathione S-transferase (GST) activity. The disulfide bond functions as an electron carrier in the glutathione-dependent synthesis of deoxyribonucleotides by the enzyme ribonucleotide reductase. In addition, it is also involved in reducing cytosolic protein- and non-protein-disulfides in a coupled system with glutathione reductase. May play a role in protection against oxidative stress caused by superoxide in vivo by regulating the redox state of the protein sulfhydryl groups. This chain is Glutaredoxin-1, found in Rhizophagus irregularis (strain DAOM 181602 / DAOM 197198 / MUCL 43194) (Arbuscular mycorrhizal fungus).